Consider the following 579-residue polypeptide: Potassium-transporting ATPase potassium-binding subunit (579 aa).

10 helical membrane passes run 1–21, 64–84, 135–155, 178–198, 265–285, 293–313, 398–418, 435–455, 503–523, and 549–569; these read MISNSVIQIGIFLVVLMACVV, HYALALLGFNAMGMLLLYGLQ, GLTVQNFVSAATGMAVLIGLI, IYILLPLALVLSVTLVSQGVV, FLELLSILLIPAALCYTFGLM, WAILATMTIILLGFTVLAVSA, GLYGMLIFAIIAVFVAGLMVG, MAALIILIPCVMTLLITAIAV, WLGIAMLVSRFWLIVPTLAIA, and LLIGVVLIVGALTFIPALALG.

Belongs to the KdpA family. As to quaternary structure, the system is composed of three essential subunits: KdpA, KdpB and KdpC.

It is found in the cell membrane. In terms of biological role, part of the high-affinity ATP-driven potassium transport (or Kdp) system, which catalyzes the hydrolysis of ATP coupled with the electrogenic transport of potassium into the cytoplasm. This subunit binds the extracellular potassium ions and delivers the ions to the membrane domain of KdpB through an intramembrane tunnel. The polypeptide is Potassium-transporting ATPase potassium-binding subunit (Herpetosiphon aurantiacus (strain ATCC 23779 / DSM 785 / 114-95)).